The sequence spans 510 residues: RNA-splicing ligase RtcB homolog (510 aa).

Positions 124, 127, 232, 264, and 358 each coordinate Mn(2+). 231-235 (NHYAE) is a GMP binding site. Residues 358-359 (HN), 407-410 (GGTM), serine 414, 433-436 (HGAG), and lysine 509 contribute to the GMP site. The active-site GMP-histidine intermediate is histidine 433.

The protein belongs to the RtcB family. In terms of assembly, catalytic component of the tRNA-splicing ligase complex. Mn(2+) is required as a cofactor.

The enzyme catalyses a 3'-end 3'-phospho-ribonucleotide-RNA + a 5'-end dephospho-ribonucleoside-RNA + GTP = a ribonucleotidyl-ribonucleotide-RNA + GMP + diphosphate. It carries out the reaction a 3'-end 2',3'-cyclophospho-ribonucleotide-RNA + a 5'-end dephospho-ribonucleoside-RNA + GTP + H2O = a ribonucleotidyl-ribonucleotide-RNA + GMP + diphosphate + H(+). Functionally, catalytic subunit of the tRNA-splicing ligase complex that acts by directly joining spliced tRNA halves to mature-sized tRNAs by incorporating the precursor-derived splice junction phosphate into the mature tRNA as a canonical 3',5'-phosphodiester. May act as an RNA ligase with broad substrate specificity, and may function toward other RNAs. The polypeptide is RNA-splicing ligase RtcB homolog (Trichoplax adhaerens (Trichoplax reptans)).